The sequence spans 348 residues: Phosphate acyltransferase (348 aa).

Belongs to the PlsX family. In terms of assembly, homodimer. Probably interacts with PlsY.

Its subcellular location is the cytoplasm. It catalyses the reaction a fatty acyl-[ACP] + phosphate = an acyl phosphate + holo-[ACP]. The protein operates within lipid metabolism; phospholipid metabolism. Its function is as follows. Catalyzes the reversible formation of acyl-phosphate (acyl-PO(4)) from acyl-[acyl-carrier-protein] (acyl-ACP). This enzyme utilizes acyl-ACP as fatty acyl donor, but not acyl-CoA. The protein is Phosphate acyltransferase of Francisella tularensis subsp. novicida (strain U112).